Here is a 476-residue protein sequence, read N- to C-terminus: Cysteine--tRNA ligase (476 aa).

Cys29 contacts Zn(2+). The 'HIGH' region signature appears at 31 to 41; it reads PTVYDYTHIGH. Zn(2+) contacts are provided by Cys209, His234, and Glu238. The 'KMSKS' region motif lies at 266-270; the sequence is KMSKS. Lys269 serves as a coordination point for ATP.

This sequence belongs to the class-I aminoacyl-tRNA synthetase family. It depends on Zn(2+) as a cofactor.

The protein resides in the cytoplasm. It carries out the reaction tRNA(Cys) + L-cysteine + ATP = L-cysteinyl-tRNA(Cys) + AMP + diphosphate. This chain is Cysteine--tRNA ligase, found in Thermococcus kodakarensis (strain ATCC BAA-918 / JCM 12380 / KOD1) (Pyrococcus kodakaraensis (strain KOD1)).